The primary structure comprises 346 residues: Integrin beta-1-binding protein 2 (346 aa).

Zn(2+) is bound by residues Cys-5, Cys-10, Cys-24, and His-27. The region spanning 5-64 (CHNKGCGQHFDPQTNLPDSCCHHPGVPVFHDALKGWSCCRKRTVDFSEFLNIKGCTVGPH) is the CHORD 1 domain. Positions 28 to 31 (PGVP) match the SH3-binding motif. The Zn(2+) site is built by Cys-42, Cys-43, Cys-59, and His-64. The SH3-binding motif lies at 70–78 (PEAPQPEGP). The segment at 70–113 (PEAPQPEGPATSSSLLEQKPPNTIPKSAETLRRERPKSDLPPKL) is disordered. Polar residues predominate over residues 79-94 (ATSSSLLEQKPPNTIP). Positions 98 to 109 (ETLRRERPKSDL) are enriched in basic and acidic residues. The Zn(2+) site is built by Cys-150 and Cys-155. In terms of domain architecture, CHORD 2 spans 150–209 (CQNPGCDAVYQGSESDATPCTYHPGAPRFHEGMKSWSCCGIQTLDFGVFLAQPGCRVGRH). The short motif at 159-162 (YQGS) is the SH2-binding element. Positions 169 and 172 each coordinate Zn(2+). The SH3-binding motif lies at 173–176 (PGAP). Zn(2+) is bound by residues Cys-187, Cys-188, Cys-204, and His-209. Residues 216–305 (LASCRHDWHQ…ADPGFWAQLE (90 aa)) enclose the CS domain. An SH2-binding motif is present at residues 235 to 238 (YGQI). A disordered region spans residues 311–346 (AEKSKSGVGLEMDEEESEDSDDDLSWTEEEEEAMGE). A compositionally biased stretch (acidic residues) spans 321 to 346 (EMDEEESEDSDDDLSWTEEEEEAMGE).

In terms of assembly, interacts with beta-1 integrin subunit. This interaction is regulated by divalent cations, and it occurs only in absence of calcium.

Its function is as follows. May play a role during maturation and/or organization of muscles cells. The chain is Integrin beta-1-binding protein 2 (ITGB1BP2) from Sus scrofa (Pig).